Here is a 177-residue protein sequence, read N- to C-terminus: Bifunctional protein PyrR (177 aa).

The PRPP-binding motif lies at 97 to 109; the sequence is IILVDDVLYTGRT.

The protein belongs to the purine/pyrimidine phosphoribosyltransferase family. PyrR subfamily.

It carries out the reaction UMP + diphosphate = 5-phospho-alpha-D-ribose 1-diphosphate + uracil. In terms of biological role, regulates the transcription of the pyrimidine nucleotide (pyr) operon in response to exogenous pyrimidines. Also displays a weak uracil phosphoribosyltransferase activity which is not physiologically significant. This chain is Bifunctional protein PyrR, found in Nitrosococcus oceani (strain ATCC 19707 / BCRC 17464 / JCM 30415 / NCIMB 11848 / C-107).